The following is a 203-amino-acid chain: ATP-dependent Clp protease proteolytic subunit (203 aa).

Ser101 serves as the catalytic Nucleophile. Residue His126 is part of the active site.

Belongs to the peptidase S14 family. Component of the chloroplastic Clp protease core complex.

It is found in the plastid. The protein resides in the chloroplast stroma. It carries out the reaction Hydrolysis of proteins to small peptides in the presence of ATP and magnesium. alpha-casein is the usual test substrate. In the absence of ATP, only oligopeptides shorter than five residues are hydrolyzed (such as succinyl-Leu-Tyr-|-NHMec, and Leu-Tyr-Leu-|-Tyr-Trp, in which cleavage of the -Tyr-|-Leu- and -Tyr-|-Trp bonds also occurs).. Its function is as follows. Cleaves peptides in various proteins in a process that requires ATP hydrolysis. Has a chymotrypsin-like activity. Plays a major role in the degradation of misfolded proteins. In Marchantia polymorpha (Common liverwort), this protein is ATP-dependent Clp protease proteolytic subunit.